Here is a 1044-residue protein sequence, read N- to C-terminus: Phosphatidylinositol 4,5-bisphosphate 3-kinase catalytic subunit delta isoform (1044 aa).

Residues 16-105 (ENQSVVVDFL…LPVLRLVARE (90 aa)) form the PI3K-ABD domain. Residues 187–278 (NRALLVNVKF…GLTPHLTMVH (92 aa)) enclose the PI3K-RBD domain. The disordered stretch occupies residues 287-312 (DEQSNPAPQVQKPRAKPPPIPAKKPS). Positions 319 to 476 (LEQPFRIELI…SAAALLICLP (158 aa)) constitute a C2 PI3K-type domain. Residues 497–674 (HSECVHVTEE…GLILEAYCRG (178 aa)) enclose the PIK helical domain. Tyrosine 524 is subject to Phosphotyrosine. In terms of domain architecture, PI3K/PI4K catalytic spans 745–1027 (CVEQCTFMDS…KFNEALRESW (283 aa)). The G-loop stretch occupies residues 751–757 (FMDSKMK). Positions 890–898 (GIGDRHSDN) are catalytic loop. An activation loop region spans residues 909–935 (HIDFGHFLGNFKTKFGINRERVPFILT). Serine 1039 is modified (phosphoserine; by autocatalysis).

This sequence belongs to the PI3/PI4-kinase family. As to quaternary structure, heterodimer of a catalytic subunit PIK3CD and a p85 regulatory subunit (PIK3R1, PIK3R2 or PIK3R3). Interacts with ERAS. Interacts with HRAS. Autophosphorylation on Ser-1039 results in the almost complete inactivation of the lipid kinase activity. In terms of tissue distribution, in humans, the highest levels of expression are seen in peripheral blood mononuclear cells, spleen, and thymus, and low levels of expression in testes, uterus, colon, and small intestine but not in other tissues examined including prostate, heart, brain, and liver. Isoform 2 is expressed in normal thymus, lung and spleen tissues, and is detected at low levels in normal lysates from colon and ovarian biopsies, at elevated levels in lysates from colorectal tumors and is abundantly expressed in some ovarian tumors (at protein level). Both isoform 1 and isoform 2 are widely expressed. Isoform 1 is expressed predominantly in leukocytes.

The protein localises to the cytoplasm. It carries out the reaction a 1,2-diacyl-sn-glycero-3-phospho-(1D-myo-inositol-4,5-bisphosphate) + ATP = a 1,2-diacyl-sn-glycero-3-phospho-(1D-myo-inositol-3,4,5-trisphosphate) + ADP + H(+). It catalyses the reaction a 1,2-diacyl-sn-glycero-3-phospho-(1D-myo-inositol) + ATP = a 1,2-diacyl-sn-glycero-3-phospho-(1D-myo-inositol-3-phosphate) + ADP + H(+). The enzyme catalyses 1-octadecanoyl-2-(5Z,8Z,11Z,14Z)-eicosatetraenoyl-sn-glycero-3-phospho-1D-myo-inositol 4,5-bisphosphate + ATP = 1-octadecanoyl-2-(5Z,8Z,11Z,14Z-eicosatetraenoyl)-sn-glycero-3-phospho-(1D-myo-inositol 3,4,5-triphosphate) + ADP + H(+). It participates in phospholipid metabolism; phosphatidylinositol phosphate biosynthesis. Its activity is regulated as follows. Activated by growth factors and cytokine receptors through a tyrosine-kinase-dependent mechanism. Activated by RAS. IC87114 inhibits lipid kinase activity and is selective in cells at doses up to 5-10 uM. IC87114 blocks T-cell receptor signaling in naive and memory T-cells and reduces cytokine production by memory T-cells. Phosphoinositide-3-kinase (PI3K) phosphorylates phosphatidylinositol (PI) and its phosphorylated derivatives at position 3 of the inositol ring to produce 3-phosphoinositides. Uses ATP and PtdIns(4,5)P2 (phosphatidylinositol 4,5-bisphosphate) to generate phosphatidylinositol 3,4,5-trisphosphate (PIP3). PIP3 plays a key role by recruiting PH domain-containing proteins to the membrane, including AKT1 and PDPK1, activating signaling cascades involved in cell growth, survival, proliferation, motility and morphology. Mediates immune responses. Plays a role in B-cell development, proliferation, migration, and function. Required for B-cell receptor (BCR) signaling. Mediates B-cell proliferation response to anti-IgM, anti-CD40 and IL4 stimulation. Promotes cytokine production in response to TLR4 and TLR9. Required for antibody class switch mediated by TLR9. Involved in the antigen presentation function of B-cells. Involved in B-cell chemotaxis in response to CXCL13 and sphingosine 1-phosphate (S1P). Required for proliferation, signaling and cytokine production of naive, effector and memory T-cells. Required for T-cell receptor (TCR) signaling. Mediates TCR signaling events at the immune synapse. Activation by TCR leads to antigen-dependent memory T-cell migration and retention to antigenic tissues. Together with PIK3CG participates in T-cell development. Contributes to T-helper cell expansion and differentiation. Required for T-cell migration mediated by homing receptors SELL/CD62L, CCR7 and S1PR1 and antigen dependent recruitment of T-cells. Together with PIK3CG is involved in natural killer (NK) cell development and migration towards the sites of inflammation. Participates in NK cell receptor activation. Plays a role in NK cell maturation and cytokine production. Together with PIK3CG is involved in neutrophil chemotaxis and extravasation. Together with PIK3CG participates in neutrophil respiratory burst. Plays important roles in mast-cell development and mast cell mediated allergic response. Involved in stem cell factor (SCF)-mediated proliferation, adhesion and migration. Required for allergen-IgE-induced degranulation and cytokine release. The lipid kinase activity is required for its biological function. Isoform 2 may be involved in stabilizing total RAS levels, resulting in increased ERK phosphorylation and increased PI3K activity. This Homo sapiens (Human) protein is Phosphatidylinositol 4,5-bisphosphate 3-kinase catalytic subunit delta isoform (PIK3CD).